A 750-amino-acid chain; its full sequence is uncharacterized protein (750 aa).

5 helical membrane-spanning segments follow: residues 2–22 (FVLLMLALVMLFIVQSSTNVI), 33–53 (SLILIPLVTLLAGSITADIFI), 79–99 (LLVLLMYLSIVAVLSTAVVSL), 116–136 (LSIFVGTILNGIIFSAVTIML), and 143–163 (IQSLIILLLFVSLFSFSSPIA). Disordered stretches follow at residues 385–461 (DNKG…KKKE) and 571–651 (NKEF…PLTA). The segment covering 398-411 (ENTKGDDNSSEKTD) has biased composition (basic and acidic residues). Polar residues predominate over residues 412–424 (TVSVSTKLKTTAD). Positions 425–436 (QSESTQMSSEST) are enriched in low complexity. Over residues 437-451 (ATGISSDPQSQGKMN) the composition is skewed to polar residues. Basic and acidic residues predominate over residues 452–461 (NKSEEQKKKE). Positions 618 to 629 (DSKGNTATNSDT) are enriched in polar residues. The chain crosses the membrane as a helical span at residues 724 to 744 (ATIVITLFLTVVLLAIAFFFF).

To M.pneumoniae MPN_335.

The protein resides in the cell membrane. This is an uncharacterized protein from Mycoplasma pneumoniae (strain ATCC 29342 / M129 / Subtype 1) (Mycoplasmoides pneumoniae).